The sequence spans 106 residues: MNSILGLIDTVTNTIGKAQQIELDKAALGQQRELALQRMNLDRQALNNQVEQFNKLLEQRVQGPIQSVRLARAAGFRVDPYSYTNQNFYDDQLNAIRLSYRNLFKN.

It belongs to the vesivirus VP2 protein family. As to quaternary structure, homooligomer. The portal-like structure consists in 12 copies of VP2. Interacts with capsid protein VP1.

It is found in the virion. The protein localises to the host cytoplasm. Functionally, minor structural protein that forms a portal-like structure at a unique three-fold axis of symmetry, following binding to the host receptor. The virion attaches to feline junctional adhesion molecule A (F11R). Once attached, the virion is endocytosed. Acidification of the endosome induces conformational change of capsid protein thereby injecting virus genomic RNA into host cytoplasm. The channel formed by VP2 may allow the delivery of the viral genome through the host endosomal membrane. This Feline calicivirus (strain CFI/68 FIV) (FCV) protein is Minor capsid protein VP2.